The following is a 163-amino-acid chain: Putative pre-16S rRNA nuclease (163 aa).

It belongs to the YqgF nuclease family.

The protein resides in the cytoplasm. Functionally, could be a nuclease involved in processing of the 5'-end of pre-16S rRNA. The polypeptide is Putative pre-16S rRNA nuclease (Nitrobacter hamburgensis (strain DSM 10229 / NCIMB 13809 / X14)).